The chain runs to 326 residues: MPLTSDVKEELSRVEVSKTTVRAAELATILRFSGGLHLISNRIAVESELDTPLLARRVRKDLAELYGVRSDISVIPASGMRRATHYLVRVMEGGETLARQTGLLDARRRPIRGLPNRLTTGSREEIAAVWRGAFLAAGTLTDPGRSAALEVTCPGNEAAMALVGAAGRLDVSAKAREVRGVHRVVIRDGDAIGQMLRAMGAQGTVVNWEEMRQRREVRATANRLVNFDDANLRRSAQAAVAACARVERAMEILGPDIPEHLKYAGDLRLRFRDSSLDELGHHADPPMTKDAVAGRIRRLLAMADKKAVDEGLPGTDANLPADLDDV.

Residues 275–308 (SLDELGHHADPPMTKDAVAGRIRRLLAMADKKAV) constitute a DNA-binding region (H-T-H motif).

The protein belongs to the WhiA family.

Its function is as follows. Involved in cell division and chromosome segregation. This Clavibacter sepedonicus (Clavibacter michiganensis subsp. sepedonicus) protein is Probable cell division protein WhiA.